Reading from the N-terminus, the 202-residue chain is Probable nicotinate-nucleotide adenylyltransferase (202 aa).

This sequence belongs to the NadD family.

It carries out the reaction nicotinate beta-D-ribonucleotide + ATP + H(+) = deamido-NAD(+) + diphosphate. It participates in cofactor biosynthesis; NAD(+) biosynthesis; deamido-NAD(+) from nicotinate D-ribonucleotide: step 1/1. Functionally, catalyzes the reversible adenylation of nicotinate mononucleotide (NaMN) to nicotinic acid adenine dinucleotide (NaAD). This is Probable nicotinate-nucleotide adenylyltransferase from Clostridium perfringens (strain ATCC 13124 / DSM 756 / JCM 1290 / NCIMB 6125 / NCTC 8237 / Type A).